Reading from the N-terminus, the 109-residue chain is Major allergen I polypeptide chain 2 (109 aa).

The first 17 residues, 1-17 (MRGALLVLALLVTQALG), serve as a signal peptide directing secretion. A glycan (N-linked (GlcNAc...) asparagine) is linked at asparagine 50.

The protein belongs to the secretoglobin family. In terms of assembly, heterotetramer composed of two non-covalently linked disulfide-linked heterodimer of chains 1 and 2. The long form is preferentially expressed in the salivary gland, while the short form is preferentially expressed in the skin.

It is found in the secreted. The polypeptide is Major allergen I polypeptide chain 2 (CH2) (Felis catus (Cat)).